The primary structure comprises 482 residues: Ribulose bisphosphate carboxylase large chain (482 aa).

The propeptide occupies 1–2 (MS). At proline 3 the chain carries N-acetylproline. Residue lysine 14 is modified to N6,N6,N6-trimethyllysine. Substrate-binding residues include asparagine 123 and threonine 173. Residue lysine 175 is the Proton acceptor of the active site. Substrate is bound at residue lysine 177. 3 residues coordinate Mg(2+): lysine 201, aspartate 203, and glutamate 204. Lysine 201 carries the N6-carboxylysine modification. Histidine 294 (proton acceptor) is an active-site residue. Arginine 295, histidine 327, and serine 379 together coordinate substrate.

This sequence belongs to the RuBisCO large chain family. Type I subfamily. As to quaternary structure, heterohexadecamer of 8 large chains and 8 small chains; disulfide-linked. The disulfide link is formed within the large subunit homodimers. It depends on Mg(2+) as a cofactor. Post-translationally, the disulfide bond which can form in the large chain dimeric partners within the hexadecamer appears to be associated with oxidative stress and protein turnover.

The protein resides in the plastid. Its subcellular location is the chloroplast. It catalyses the reaction 2 (2R)-3-phosphoglycerate + 2 H(+) = D-ribulose 1,5-bisphosphate + CO2 + H2O. The catalysed reaction is D-ribulose 1,5-bisphosphate + O2 = 2-phosphoglycolate + (2R)-3-phosphoglycerate + 2 H(+). In terms of biological role, ruBisCO catalyzes two reactions: the carboxylation of D-ribulose 1,5-bisphosphate, the primary event in carbon dioxide fixation, as well as the oxidative fragmentation of the pentose substrate in the photorespiration process. Both reactions occur simultaneously and in competition at the same active site. This Phytolacca americana (American pokeweed) protein is Ribulose bisphosphate carboxylase large chain.